The chain runs to 335 residues: MSDTVVSLTASPAAIRHDWTLAEIQAIHDMPLLDLVHRAGVVHRAHNDPADIQRAALLSIKTGGCPEDCAYCPQSAHHKGANLPRERLMPVDAVLKEAAAAKANGAHRFCMGAAWRKPKDGPDFDAVLEMVRGVRGLGMEACVTLGMLTQSQAQRLAEAGLTSYNHNLDTGPEFYGDIISTRTYDDRLQTLEHVRQAGIGVCCGGIVGMGERVRDRAEMLLVLANHAPHPESVPINALVAVEGTPLEDRPPIDPLDLVRMCATARIVMPKARVRLSAGRKSLTREAQILCFLAGANSIFYGERLLTTANNEADADAELLRDIGVPVPEVTLAAAE.

The 230-residue stretch at 50–279 (ADIQRAALLS…KARVRLSAGR (230 aa)) folds into the Radical SAM core domain. Positions 65, 69, and 72 each coordinate [4Fe-4S] cluster. [2Fe-2S] cluster contacts are provided by cysteine 110, cysteine 142, cysteine 202, and arginine 274.

It belongs to the radical SAM superfamily. Biotin synthase family. In terms of assembly, homodimer. [4Fe-4S] cluster is required as a cofactor. The cofactor is [2Fe-2S] cluster.

The enzyme catalyses (4R,5S)-dethiobiotin + (sulfur carrier)-SH + 2 reduced [2Fe-2S]-[ferredoxin] + 2 S-adenosyl-L-methionine = (sulfur carrier)-H + biotin + 2 5'-deoxyadenosine + 2 L-methionine + 2 oxidized [2Fe-2S]-[ferredoxin]. It functions in the pathway cofactor biosynthesis; biotin biosynthesis; biotin from 7,8-diaminononanoate: step 2/2. Functionally, catalyzes the conversion of dethiobiotin (DTB) to biotin by the insertion of a sulfur atom into dethiobiotin via a radical-based mechanism. The polypeptide is Biotin synthase (Methylorubrum extorquens (strain CM4 / NCIMB 13688) (Methylobacterium extorquens)).